The following is a 386-amino-acid chain: Protein-glutamate methylesterase/protein-glutamine glutaminase (386 aa).

One can recognise a Response regulatory domain in the interval 4–121 (KVLVVDDSAF…ARNRDEAVKT (118 aa)). Position 55 is a 4-aspartylphosphate (aspartate 55). Residues 133–161 (PVSRTSARASTPPPVAKQPERSSEPTTAL) form a disordered region. Residues 190-384 (INRAYQLLAI…KAIMKEVGYS (195 aa)) form the CheB-type methylesterase domain. Catalysis depends on residues serine 202, histidine 229, and aspartate 326.

The protein belongs to the CheB family. Post-translationally, phosphorylated by CheA. Phosphorylation of the N-terminal regulatory domain activates the methylesterase activity.

It localises to the cytoplasm. It catalyses the reaction [protein]-L-glutamate 5-O-methyl ester + H2O = L-glutamyl-[protein] + methanol + H(+). The enzyme catalyses L-glutaminyl-[protein] + H2O = L-glutamyl-[protein] + NH4(+). Involved in chemotaxis. Part of a chemotaxis signal transduction system that modulates chemotaxis in response to various stimuli. Catalyzes the demethylation of specific methylglutamate residues introduced into the chemoreceptors (methyl-accepting chemotaxis proteins or MCP) by CheR. Also mediates the irreversible deamidation of specific glutamine residues to glutamic acid. The protein is Protein-glutamate methylesterase/protein-glutamine glutaminase of Idiomarina loihiensis (strain ATCC BAA-735 / DSM 15497 / L2-TR).